The following is a 115-amino-acid chain: Phosphoribosyl-AMP cyclohydrolase (115 aa).

D80 contributes to the Mg(2+) binding site. C81 contributes to the Zn(2+) binding site. Mg(2+)-binding residues include D82 and D84. Zn(2+)-binding residues include C97 and C104.

The protein belongs to the PRA-CH family. As to quaternary structure, homodimer. Mg(2+) serves as cofactor. Zn(2+) is required as a cofactor.

It localises to the cytoplasm. The enzyme catalyses 1-(5-phospho-beta-D-ribosyl)-5'-AMP + H2O = 1-(5-phospho-beta-D-ribosyl)-5-[(5-phospho-beta-D-ribosylamino)methylideneamino]imidazole-4-carboxamide. Its pathway is amino-acid biosynthesis; L-histidine biosynthesis; L-histidine from 5-phospho-alpha-D-ribose 1-diphosphate: step 3/9. Its function is as follows. Catalyzes the hydrolysis of the adenine ring of phosphoribosyl-AMP. This Mycobacterium leprae (strain Br4923) protein is Phosphoribosyl-AMP cyclohydrolase.